A 319-amino-acid polypeptide reads, in one-letter code: N-acyl-aromatic-L-amino acid amidohydrolase (carboxylate-forming) (319 aa).

The segment at 1-210 (MCSLPVPREP…TVLDFIELFN (210 aa)) is hydrolytic domain. Zn(2+)-binding residues include His21 and Glu24. Residues Arg63 and 70-71 (NR) contribute to the substrate site. Position 116 (His116) interacts with Zn(2+). Positions 178 and 288 each coordinate substrate. Positions 211–318 (QGTAFPAFEM…PALTPAPSPA (108 aa)) are shielding domain.

It belongs to the AspA/AstE family. Aspartoacylase subfamily. As to quaternary structure, exists as a mixture of homodimers and homotetramer, both catalytically active. (Microbial infection) Interacts with hepatitis C virus/HCV core protein. Requires Zn(2+) as cofactor.

The protein localises to the apical cell membrane. The protein resides in the cytoplasm. The catalysed reaction is an N-acyl-aromatic L-alpha-amino acid + H2O = an aromatic L-alpha-amino acid + a carboxylate. It catalyses the reaction an N-acetyl-L-cysteine-S-conjugate + H2O = an S-substituted L-cysteine + acetate. Its function is as follows. Plays an important role in deacetylating mercapturic acids in kidney proximal tubules. Also acts on N-acetyl-aromatic amino acids. The protein is N-acyl-aromatic-L-amino acid amidohydrolase (carboxylate-forming) (ACY3) of Homo sapiens (Human).